The sequence spans 484 residues: Sialidase-4 (484 aa).

The FRIP motif motif lies at 22-25; sequence YRVP. R23 and R43 together coordinate substrate. Residues D47 and D48 each act as proton acceptor in the active site. Residues 127–138 form a BNR 1 repeat; that stretch reads VASRDAGLSWGS. Substrate is bound by residues Y177 and Y179. A BNR 2 repeat occupies 200–211; the sequence is FYSDDHGRTWRC. Substrate-binding residues include E222 and R242. A BNR 3 repeat occupies 251-262; it reads ALSTDEGTSFLP. Residues 284–357 form a disordered region; it reads PAPAPNRPRD…GPRPGVSGDV (74 aa). Residues 336–345 are compositionally biased toward low complexity; it reads RLQPRGDGPR. R389 serves as a coordination point for substrate. Residue Y419 is the Nucleophile of the active site. E440 is a catalytic residue.

It belongs to the glycosyl hydrolase 33 family. Post-translationally, N-glycosylated. In terms of tissue distribution, predominant form in liver. Also expressed in brain, kidney and colon. As to expression, highly expressed in brain and at lower levels in kidney and liver.

It is found in the cell membrane. The protein resides in the endoplasmic reticulum membrane. The protein localises to the microsome membrane. Its subcellular location is the mitochondrion membrane. It localises to the cell projection. It is found in the neuron projection. The protein resides in the mitochondrion inner membrane. The protein localises to the mitochondrion outer membrane. Its subcellular location is the lysosome lumen. It carries out the reaction Hydrolysis of alpha-(2-&gt;3)-, alpha-(2-&gt;6)-, alpha-(2-&gt;8)- glycosidic linkages of terminal sialic acid residues in oligosaccharides, glycoproteins, glycolipids, colominic acid and synthetic substrates.. The catalysed reaction is a ganglioside GM3 + H2O = a beta-D-galactosyl-(1-&gt;4)-beta-D-glucosyl-(1&lt;-&gt;1)-ceramide + N-acetylneuraminate. The enzyme catalyses a ganglioside GM3 (d18:1(4E)) + H2O = a beta-D-Gal-(1-&gt;4)-beta-D-Glc-(1&lt;-&gt;1)-Cer(d18:1(4E)) + N-acetylneuraminate. It catalyses the reaction a ganglioside GM2 + H2O = a ganglioside GA2 + N-acetylneuraminate. It carries out the reaction a ganglioside GM2 (d18:1(4E)) + H2O = a ganglioside GA2 (d18:1(4E)) + N-acetylneuraminate. The catalysed reaction is a ganglioside GD1a + H2O = a ganglioside GM1 + N-acetylneuraminate. The enzyme catalyses a ganglioside GD1a (d18:1(4E)) + H2O = a ganglioside GM1 (d18:1(4E)) + N-acetylneuraminate. It catalyses the reaction a ganglioside GD3 + H2O = a ganglioside GM3 + N-acetylneuraminate. It carries out the reaction a ganglioside GD3 (d18:1(4E)) + H2O = a ganglioside GM3 (d18:1(4E)) + N-acetylneuraminate. Exo-alpha-sialidase that catalyzes the hydrolytic cleavage of the terminal sialic acid (N-acetylneuraminic acid, Neu5Ac) of a glycan moiety in the catabolism of glycolipids, glycoproteins and oligosacharides. Efficiently hydrolyzes gangliosides including alpha-(2-&gt;3)-sialylated GD1a and GM3 and alpha-(2-&gt;8)-sialylated GD3. Hydrolyzes poly-alpha-(2-&gt;8)-sialylated neural cell adhesion molecule NCAM1 likely at growth cones, suppressing neurite outgrowth in hippocampal neurons. May desialylate sialyl Lewis A and X antigens at the cell surface, down-regulating these glycan epitopes recognized by SELE/E selectin in the initiation of cell adhesion and extravasation. Has sialidase activity toward mucin, fetuin and sialyllactose. This Homo sapiens (Human) protein is Sialidase-4 (NEU4).